A 97-amino-acid chain; its full sequence is Large ribosomal subunit protein uL23 (97 aa).

It belongs to the universal ribosomal protein uL23 family. As to quaternary structure, part of the 50S ribosomal subunit. Contacts protein L29, and trigger factor when it is bound to the ribosome.

Its function is as follows. One of the early assembly proteins it binds 23S rRNA. One of the proteins that surrounds the polypeptide exit tunnel on the outside of the ribosome. Forms the main docking site for trigger factor binding to the ribosome. This Lactococcus lactis subsp. cremoris (strain SK11) protein is Large ribosomal subunit protein uL23.